Here is a 100-residue protein sequence, read N- to C-terminus: Small ribosomal subunit protein bS20 (100 aa).

Belongs to the bacterial ribosomal protein bS20 family.

In terms of biological role, binds directly to 16S ribosomal RNA. This chain is Small ribosomal subunit protein bS20, found in Synechococcus sp. (strain JA-3-3Ab) (Cyanobacteria bacterium Yellowstone A-Prime).